The primary structure comprises 252 residues: Triosephosphate isomerase (252 aa).

9-11 (NWK) contributes to the substrate binding site. Histidine 100 functions as the Electrophile in the catalytic mechanism. Catalysis depends on glutamate 171, which acts as the Proton acceptor. Residues glycine 177, serine 216, and 237-238 (GG) each bind substrate.

It belongs to the triosephosphate isomerase family. As to quaternary structure, homodimer.

The protein localises to the cytoplasm. It catalyses the reaction D-glyceraldehyde 3-phosphate = dihydroxyacetone phosphate. The protein operates within carbohydrate biosynthesis; gluconeogenesis. It functions in the pathway carbohydrate degradation; glycolysis; D-glyceraldehyde 3-phosphate from glycerone phosphate: step 1/1. Involved in the gluconeogenesis. Catalyzes stereospecifically the conversion of dihydroxyacetone phosphate (DHAP) to D-glyceraldehyde-3-phosphate (G3P). The polypeptide is Triosephosphate isomerase (Polynucleobacter asymbioticus (strain DSM 18221 / CIP 109841 / QLW-P1DMWA-1) (Polynucleobacter necessarius subsp. asymbioticus)).